The primary structure comprises 181 residues: Isopentenyl-diphosphate Delta-isomerase (181 aa).

Positions 25 and 32 each coordinate Mn(2+). In terms of domain architecture, Nudix hydrolase spans 30-164; it reads LLHLAFSCWL…PWAFSPWMVL (135 aa). Cys67 is a catalytic residue. Residue His69 participates in Mn(2+) binding. Mg(2+) is bound at residue Glu87. Residues Glu114 and Glu116 each coordinate Mn(2+). Glu116 is an active-site residue.

Belongs to the IPP isomerase type 1 family. In terms of assembly, homodimer. Mg(2+) serves as cofactor. Mn(2+) is required as a cofactor.

The protein localises to the cytoplasm. It catalyses the reaction isopentenyl diphosphate = dimethylallyl diphosphate. The protein operates within isoprenoid biosynthesis; dimethylallyl diphosphate biosynthesis; dimethylallyl diphosphate from isopentenyl diphosphate: step 1/1. Catalyzes the 1,3-allylic rearrangement of the homoallylic substrate isopentenyl (IPP) to its highly electrophilic allylic isomer, dimethylallyl diphosphate (DMAPP). The chain is Isopentenyl-diphosphate Delta-isomerase from Citrobacter koseri (strain ATCC BAA-895 / CDC 4225-83 / SGSC4696).